A 312-amino-acid chain; its full sequence is 2-aminophenol 1,6-dioxygenase subunit beta (312 aa).

Positions 13, 62, and 251 each coordinate Fe cation.

This sequence belongs to the LigB/MhpB extradiol dioxygenase family. As to quaternary structure, the APD complex is a heterotetramer of 2 alpha (CnbCa) and 2 beta (CnbCb) subunits. It depends on Fe(2+) as a cofactor.

It carries out the reaction 2-aminophenol + O2 = 2-aminomuconate 6-semialdehyde. The catalysed reaction is 2-amino-5-chlorophenol + O2 = 2-amino-5-chloromuconate 6-semialdehyde. Its pathway is xenobiotic degradation; nitrobenzene degradation. The protein operates within xenobiotic degradation; 4-chloronitrobenzene degradation. With respect to regulation, complete loss of activity in the presence of Ni(2+), Co(2+), Cd(2+), Zn(2+) and hydrogen peroxide, however activity with hydrogen peroxide partially restored upon addition of excess ascorbate. Partially inhibited by Fe(2+), Mg(2+), Ca(2+), Mn(2+), Cu(2+) and also by EDTA, at 2 mM concentration. Total activity inhibited in the presence of catechol or 4-nitrocatechol but completely restored after removal of catechol and addition of 2 mM Fe(2+) and 5 mM ascorbate. Its function is as follows. Component of the 2-aminophenol 1,6-dioxygenase (APD) complex that catalyzes the ring fission of 2-aminophenol to produce 2-aminomuconic semialdehyde. CnbCb seems to be the catalytic subunit of the complex. Also active on other substrates such as 2-amino-5-chlorophenol (68% activity), protocatechuate (33% activity) and catechol (5% activity). Both 2-aminophenol and 2-amino-5-cholorophenol are likely native substrates for this dioxygenase which is involved in the reductive degradation pathway of both nitrobenzene (NB) and 4-chloronitrobenzene (4-CNB), allowing C.testosteroni strain CNB-1 to grow on these compounds as sole source of carbon, nitrogen, and energy. This Comamonas testosteroni (Pseudomonas testosteroni) protein is 2-aminophenol 1,6-dioxygenase subunit beta.